Consider the following 253-residue polypeptide: Neurotrophin-3 (253 aa).

An N-terminal signal peptide occupies residues 1–18; the sequence is MSILFYVMFLAYLRGVQG. Residues 19–134 constitute a propeptide that is removed on maturation; sequence NSMDQRSLPE…AANRTSRRKR (116 aa). The segment at 62–89 is disordered; that stretch reads TLPKAEAPPREPAKSEFQPVTAMGPELL. A glycan (N-linked (GlcNAc...) asparagine) is linked at Asn-127. Cystine bridges form between Cys-148–Cys-213, Cys-191–Cys-242, and Cys-201–Cys-244.

This sequence belongs to the NGF-beta family.

Its subcellular location is the secreted. In terms of biological role, seems to promote the survival of visceral and proprioceptive sensory neurons. In Bos taurus (Bovine), this protein is Neurotrophin-3 (NTF3).